A 50-amino-acid polypeptide reads, in one-letter code: Temporin-SHc (50 aa).

A signal peptide spans 1–10 (FLGTINLSLC). Residues 11–35 (EQERDADEEERRDEPDGSNVEVEKR) constitute a propeptide that is removed on maturation. Phe48 is subject to Phenylalanine amide.

Expressed by the skin glands.

Its subcellular location is the secreted. It localises to the target cell membrane. Its function is as follows. Amphipathic alpha-helical antimicrobial peptide with potent activity against some Gram-positive bacteria (MIC=4-&gt;80 uM), potent activity against fungi (MIC=10-20 uM), and no activity against Gram-negative bacteria. Does not display anti-leishmania activity. Does not show hemolytic activity (LC(50)&gt;80 uM). In Pelophylax saharicus (Sahara frog), this protein is Temporin-SHc.